We begin with the raw amino-acid sequence, 201 residues long: Large ribosomal subunit protein uL4 (201 aa).

Residues 44 to 71 (RAQKTRAEVTGSGKKPWRQKGTGRARSG) form a disordered region.

It belongs to the universal ribosomal protein uL4 family. As to quaternary structure, part of the 50S ribosomal subunit.

One of the primary rRNA binding proteins, this protein initially binds near the 5'-end of the 23S rRNA. It is important during the early stages of 50S assembly. It makes multiple contacts with different domains of the 23S rRNA in the assembled 50S subunit and ribosome. Its function is as follows. Forms part of the polypeptide exit tunnel. This is Large ribosomal subunit protein uL4 from Shigella flexneri serotype 5b (strain 8401).